We begin with the raw amino-acid sequence, 420 residues long: Serine hydroxymethyltransferase (420 aa).

Residues Leu-121 and 125–127 contribute to the (6S)-5,6,7,8-tetrahydrofolate site; that span reads GHL. Lys-230 is modified (N6-(pyridoxal phosphate)lysine).

The protein belongs to the SHMT family. As to quaternary structure, homodimer. Requires pyridoxal 5'-phosphate as cofactor.

The protein resides in the cytoplasm. It catalyses the reaction (6R)-5,10-methylene-5,6,7,8-tetrahydrofolate + glycine + H2O = (6S)-5,6,7,8-tetrahydrofolate + L-serine. It functions in the pathway one-carbon metabolism; tetrahydrofolate interconversion. The protein operates within amino-acid biosynthesis; glycine biosynthesis; glycine from L-serine: step 1/1. Catalyzes the reversible interconversion of serine and glycine with tetrahydrofolate (THF) serving as the one-carbon carrier. This reaction serves as the major source of one-carbon groups required for the biosynthesis of purines, thymidylate, methionine, and other important biomolecules. Also exhibits THF-independent aldolase activity toward beta-hydroxyamino acids, producing glycine and aldehydes, via a retro-aldol mechanism. This Streptomyces avermitilis (strain ATCC 31267 / DSM 46492 / JCM 5070 / NBRC 14893 / NCIMB 12804 / NRRL 8165 / MA-4680) protein is Serine hydroxymethyltransferase.